The primary structure comprises 139 residues: Small ribosomal subunit protein uS12 (139 aa).

It belongs to the universal ribosomal protein uS12 family. As to quaternary structure, part of the 30S ribosomal subunit. Contacts proteins S8 and S17. May interact with IF1 in the 30S initiation complex.

Its function is as follows. With S4 and S5 plays an important role in translational accuracy. In terms of biological role, interacts with and stabilizes bases of the 16S rRNA that are involved in tRNA selection in the A site and with the mRNA backbone. Located at the interface of the 30S and 50S subunits, it traverses the body of the 30S subunit contacting proteins on the other side and probably holding the rRNA structure together. The combined cluster of proteins S8, S12 and S17 appears to hold together the shoulder and platform of the 30S subunit. The polypeptide is Small ribosomal subunit protein uS12 (Mycoplasma pneumoniae (strain ATCC 29342 / M129 / Subtype 1) (Mycoplasmoides pneumoniae)).